An 81-amino-acid chain; its full sequence is ATP synthase subunit c (81 aa).

Transmembrane regions (helical) follow at residues 7–27 and 57–77; these read AASV…PGLG and FAFM…LLFA.

This sequence belongs to the ATPase C chain family. F-type ATPases have 2 components, F(1) - the catalytic core - and F(0) - the membrane proton channel. F(1) has five subunits: alpha(3), beta(3), gamma(1), delta(1), epsilon(1). F(0) has four main subunits: a(1), b(1), b'(1) and c(10-14). The alpha and beta chains form an alternating ring which encloses part of the gamma chain. F(1) is attached to F(0) by a central stalk formed by the gamma and epsilon chains, while a peripheral stalk is formed by the delta, b and b' chains.

It localises to the cellular thylakoid membrane. F(1)F(0) ATP synthase produces ATP from ADP in the presence of a proton or sodium gradient. F-type ATPases consist of two structural domains, F(1) containing the extramembraneous catalytic core and F(0) containing the membrane proton channel, linked together by a central stalk and a peripheral stalk. During catalysis, ATP synthesis in the catalytic domain of F(1) is coupled via a rotary mechanism of the central stalk subunits to proton translocation. Functionally, key component of the F(0) channel; it plays a direct role in translocation across the membrane. A homomeric c-ring of between 10-14 subunits forms the central stalk rotor element with the F(1) delta and epsilon subunits. The protein is ATP synthase subunit c of Prochlorococcus marinus (strain MIT 9301).